Here is a 261-residue protein sequence, read N- to C-terminus: Hemin import ATP-binding protein HmuV (261 aa).

Positions L7–K243 constitute an ABC transporter domain. G39–S46 lines the ATP pocket.

It belongs to the ABC transporter superfamily. Heme (hemin) importer (TC 3.A.1.14.5) family. In terms of assembly, the complex is composed of two ATP-binding proteins (HmuV), two transmembrane proteins (HmuU) and a solute-binding protein (HmuT).

The protein localises to the cell inner membrane. Functionally, part of the ABC transporter complex HmuTUV involved in hemin import. Responsible for energy coupling to the transport system. The sequence is that of Hemin import ATP-binding protein HmuV from Vibrio vulnificus (strain CMCP6).